We begin with the raw amino-acid sequence, 316 residues long: Olfactory receptor 52A5 (316 aa).

The Extracellular segment spans residues 1–27 (MPTFNGSVFMPSAFILIGIPGLESVQC). A glycan (N-linked (GlcNAc...) asparagine) is linked at Asn-5. Residues 28 to 48 (WIGIPFSAMYLIGVIGNSLIL) traverse the membrane as a helical segment. The Cytoplasmic portion of the chain corresponds to 49-56 (VIIKYENS). Residues 57-77 (LHIPMYIFLAMLAATDIALNT) form a helical membrane-spanning segment. The Extracellular portion of the chain corresponds to 78–101 (CILPKMLGIFWFHLPEISFDACLF). The chain crosses the membrane as a helical span at residues 102–122 (QMWLIHSFQAIESGILLAMAL). Residues 123–141 (DRYVAICIPLRHATIFSQQ) lie on the Cytoplasmic side of the membrane. A helical membrane pass occupies residues 142–162 (FLTHIGLGVTLRAAILIIPSL). Residues 163–199 (GLIKCCLKHYRTTVISHSYCEHMAIVKLATEDIRVNK) are Extracellular-facing. A helical transmembrane segment spans residues 200–220 (IYGLFVAFAILGFDIIFITLS). At 221–240 (YVQIFITVFQLPQKEARFKA) the chain is on the cytoplasmic side. The helical transmembrane segment at 241 to 261 (FNTCIAHICVFLQFYLLAFFS) threads the bilayer. The Extracellular segment spans residues 262–276 (FFTHRFGSHIPPYIH). A helical membrane pass occupies residues 277–297 (ILLSNLYLLVPPFLNPIVYGV). The Cytoplasmic segment spans residues 298 to 316 (KTKQIRDHIVKVFFFKKVT).

This sequence belongs to the G-protein coupled receptor 1 family.

Its subcellular location is the cell membrane. Odorant receptor. In Homo sapiens (Human), this protein is Olfactory receptor 52A5 (OR52A5).